The chain runs to 584 residues: Actin-binding protein IPP (584 aa).

In terms of domain architecture, BTB spans 37–104 (CDVQLQVGKE…IYTGVVNIAV (68 aa)). Kelch repeat units lie at residues 296-343 (YTRL…VVGG), 344-390 (MVYA…VCYG), 391-437 (AIYA…EMQG), 439-485 (IYAV…ALND), 487-533 (IYAI…TVNG), and 535-583 (LYVS…GVAV).

Expression seems confined to tissues derived from trophectoderm and primitive endoderm.

Its subcellular location is the cytoplasm. The protein localises to the cytoskeleton. In terms of biological role, may play a role in organizing the actin cytoskeleton. This chain is Actin-binding protein IPP (Ipp), found in Mus musculus (Mouse).